The following is a 147-amino-acid chain: Large ribosomal subunit protein uL13 (147 aa).

This sequence belongs to the universal ribosomal protein uL13 family. In terms of assembly, part of the 50S ribosomal subunit.

Its function is as follows. This protein is one of the early assembly proteins of the 50S ribosomal subunit, although it is not seen to bind rRNA by itself. It is important during the early stages of 50S assembly. The chain is Large ribosomal subunit protein uL13 from Pseudothermotoga lettingae (strain ATCC BAA-301 / DSM 14385 / NBRC 107922 / TMO) (Thermotoga lettingae).